The primary structure comprises 319 residues: DNA-directed RNA polymerases IV and V subunit 3B (319 aa).

N-acetylmethionine is present on methionine 1.

It belongs to the archaeal Rpo3/eukaryotic RPB3 RNA polymerase subunit family. Component of the RNA polymerase IV and V complexes. Interacts with NRPB11, SHH1, GRP23 and NRPD1.

The protein localises to the nucleus. Functionally, DNA-dependent RNA polymerase catalyzes the transcription of DNA into RNA using the four ribonucleoside triphosphates as substrates. Component of RNA polymerases IV and V which mediate short-interfering RNAs (siRNA) accumulation and subsequent RNA-directed DNA methylation-dependent (RdDM) transcriptional gene silencing (TGS) of endogenous repeated sequences, including transposable elements. This chain is DNA-directed RNA polymerases IV and V subunit 3B (NRPD3B), found in Arabidopsis thaliana (Mouse-ear cress).